The chain runs to 144 residues: MRLNTLSPAPGRVTSRKRVGRGIGSGLGKTAGRGHKGLKSRSGGTVKPGFEGGQMPLQKRLPKYGFTSRIGRVSAEIRLSELNKVEADVIDLDALLKADLISTNIKRAKIFLSGELKKAVTVKGLAVTKGAKAAIEAAGGKVEE.

The tract at residues 1–54 (MRLNTLSPAPGRVTSRKRVGRGIGSGLGKTAGRGHKGLKSRSGGTVKPGFEGGQ) is disordered. Gly residues predominate over residues 21 to 31 (RGIGSGLGKTA).

This sequence belongs to the universal ribosomal protein uL15 family. As to quaternary structure, part of the 50S ribosomal subunit.

In terms of biological role, binds to the 23S rRNA. The polypeptide is Large ribosomal subunit protein uL15 (Teredinibacter turnerae (strain ATCC 39867 / T7901)).